Here is a 72-residue protein sequence, read N- to C-terminus: Translation initiation factor IF-1 (72 aa).

Residues 1-72 form the S1-like domain; the sequence is MAKEDNIEMQ…TKGRIVFRAR (72 aa).

Belongs to the IF-1 family. Component of the 30S ribosomal translation pre-initiation complex which assembles on the 30S ribosome in the order IF-2 and IF-3, IF-1 and N-formylmethionyl-tRNA(fMet); mRNA recruitment can occur at any time during PIC assembly.

The protein localises to the cytoplasm. Its function is as follows. One of the essential components for the initiation of protein synthesis. Stabilizes the binding of IF-2 and IF-3 on the 30S subunit to which N-formylmethionyl-tRNA(fMet) subsequently binds. Helps modulate mRNA selection, yielding the 30S pre-initiation complex (PIC). Upon addition of the 50S ribosomal subunit IF-1, IF-2 and IF-3 are released leaving the mature 70S translation initiation complex. The protein is Translation initiation factor IF-1 of Shewanella baltica (strain OS155 / ATCC BAA-1091).